The primary structure comprises 192 residues: Transmembrane protein 276 (192 aa).

The first 32 residues, 1 to 32, serve as a signal peptide directing secretion; that stretch reads MAPKPGAEWSTALSHLVLGVVSLHAAVSTAEA. The next 4 helical transmembrane spans lie at 35–55, 63–83, 89–109, and 114–134; these read GAAA…APGL, AGAW…FHWV, SANL…HLGP, and VAGQ…AVFT.

The protein localises to the membrane. This chain is Transmembrane protein 276, found in Homo sapiens (Human).